Here is a 232-residue protein sequence, read N- to C-terminus: MNRYKFNDIENRLGVYFNNPSLIKTALTHSSFGNQFKDAKYNERLEFLGDSVLQLCITEYLFNKFKDKSEGELTKIRSLIVCENSLYEIAKKLSLGEYIRMSKGEELTGGRERMSIQADAVEAVIAAVYLDKGIGFVNDFILLHFEEMINKAINNEIVLDFKTKLQELLQKDGEILIQYELVKYEGPPHRRKFFTNVIINEKVMGIGEGYSKKEAEQNAAKEALKRLEKNYE.

Positions 6–133 (FNDIENRLGV…VIAAVYLDKG (128 aa)) constitute an RNase III domain. Mg(2+) is bound at residue E46. D50 is a catalytic residue. Mg(2+) contacts are provided by D119 and E122. The active site involves E122. The region spanning 160-229 (DFKTKLQELL…AKEALKRLEK (70 aa)) is the DRBM domain.

This sequence belongs to the ribonuclease III family. In terms of assembly, homodimer. Mg(2+) is required as a cofactor.

The protein resides in the cytoplasm. It carries out the reaction Endonucleolytic cleavage to 5'-phosphomonoester.. Digests double-stranded RNA. Involved in the processing of primary rRNA transcript to yield the immediate precursors to the large and small rRNAs (23S and 16S). Processes some mRNAs, and tRNAs when they are encoded in the rRNA operon. Processes pre-crRNA and tracrRNA of type II CRISPR loci if present in the organism. The sequence is that of Ribonuclease 3 from Clostridium botulinum (strain Eklund 17B / Type B).